Here is a 443-residue protein sequence, read N- to C-terminus: Probable D-serine dehydratase (443 aa).

Position 116 is an N6-(pyridoxal phosphate)lysine (Lys116).

The protein belongs to the serine/threonine dehydratase family. DsdA subfamily. It depends on pyridoxal 5'-phosphate as a cofactor.

It catalyses the reaction D-serine = pyruvate + NH4(+). This is Probable D-serine dehydratase from Bacillus cereus (strain AH187).